Reading from the N-terminus, the 1227-residue chain is RNA-binding protein 20 (1227 aa).

Disordered regions lie at residues 1–58 and 289–374; these read MVLA…QAGL and GSHV…SKQG. Positions 27–42 are enriched in low complexity; it reads PGARASPAPSGPRGMQ. The segment covering 43–56 has biased composition (pro residues); sequence QPPPPPQPPPPPQA. Residues 313 to 331 are compositionally biased toward polar residues; sequence QGTNSQWESPHGFSGQSKP. A U1-type zinc finger spans residues 409-443; it reads HLPHICSICDKKVFDLKDWELHVKGKLHAQKCLVF. Phosphoserine is present on serine 498. Residues 518 to 593 enclose the RRM domain; the sequence is RVVHICNLPE…EKLLIRMSKR (76 aa). Residues 624–634 are compositionally biased toward basic and acidic residues; it reads EADRYGPERPR. Disordered stretches follow at residues 624–906 and 977–1089; these read EADR…TNME and SLKS…ASPP. Residues 628–655 form an RS region; it reads YGPERPRSRSPVSRSLSPRSHTPSFTSC. Phosphoserine occurs at positions 635, 637, 640, 642, 660, and 679. A compositionally biased stretch (low complexity) spans 636–660; that stretch reads RSPVSRSLSPRSHTPSFTSCSSSHS. 2 stretches are compositionally biased toward basic and acidic residues: residues 674-709 and 716-738; these read DSWE…PWAH and RQLD…EKYP. The span at 741–752 shows a compositional bias: polar residues; it reads GSPNLPHSVSSY. A Phosphoserine modification is found at serine 742. Composition is skewed to basic and acidic residues over residues 753-772, 784-807, and 816-856; these read KSRE…DKYL, RKDE…EDGL, and EGAK…KEEQ. Serine 801 carries the post-translational modification Phosphoserine. Phosphoserine occurs at positions 865, 876, 891, 893, 977, 980, and 1013. Residues 868–888 show a composition bias toward basic and acidic residues; the sequence is RQEKEAEFSDPENTRTKKEQD. Residues 1024–1036 are compositionally biased toward basic and acidic residues; that stretch reads CYEKEAKGVESSD. A phosphoserine mark is found at serine 1048, serine 1060, serine 1080, serine 1115, and serine 1120. A Matrin-type zinc finger spans residues 1161–1192; that stretch reads FYCKLCGLFYTSEETAKMSHCRSAVHYRNLQK. Over residues 1201-1215 the composition is skewed to basic and acidic residues; it reads GLKETEGADSPRPED. Residues 1201-1227 form a disordered region; sequence GLKETEGADSPRPEDSGIVPRFERKKL. Residue serine 1210 is modified to Phosphoserine.

In terms of assembly, associates with components of the U1 and U2 U1 small nuclear ribonucleoprotein complexes. In terms of processing, phosphorylation regulates the subcellular localization. Phosphorylation of Ser-635 and Ser-637 in the RS (arginine/serine-rich) region promotes nuclear localization of the protein. In contrast, phosphorylation of the C-terminal disordered region promotes localization to cytoplasmic ribonucleoprotein granules. Mainly expressed in the heart. Also expressed in skeletal muscle tissues, ovary, small intestine and colon.

The protein localises to the nucleus. Its subcellular location is the cytoplasm. It localises to the cytoplasmic ribonucleoprotein granule. RNA-binding protein that acts as a regulator of mRNA splicing of a subset of genes encoding key structural proteins involved in cardiac development, such as TTN (Titin), CACNA1C, CAMK2D or PDLIM5/ENH. Acts as a repressor of mRNA splicing: specifically binds the 5'UCUU-3' motif that is predominantly found within intronic sequences of pre-mRNAs, leading to the exclusion of specific exons in target transcripts. RBM20-mediated exon skipping is hormone-dependent and is essential for TTN isoform transition in both cardiac and skeletal muscles. RBM20-mediated exon skipping of TTN provides substrates for the formation of circular RNA (circRNAs) from the TTN transcripts. Together with RBM24, promotes the expression of short isoforms of PDLIM5/ENH in cardiomyocytes. The protein is RNA-binding protein 20 of Homo sapiens (Human).